The primary structure comprises 202 residues: Small ribosomal subunit protein uS4c (202 aa).

Residues 90–153 (MRLDNIIFRL…KSQAIISKNI (64 aa)) enclose the S4 RNA-binding domain.

This sequence belongs to the universal ribosomal protein uS4 family. As to quaternary structure, part of the 30S ribosomal subunit. Contacts protein S5. The interaction surface between S4 and S5 is involved in control of translational fidelity.

It is found in the plastid. The protein resides in the chloroplast. Its function is as follows. One of the primary rRNA binding proteins, it binds directly to 16S rRNA where it nucleates assembly of the body of the 30S subunit. In terms of biological role, with S5 and S12 plays an important role in translational accuracy. The sequence is that of Small ribosomal subunit protein uS4c (rps4) from Splachnum sphaericum (Pinkstink dung moss).